The chain runs to 197 residues: Adenylate kinase isoenzyme 6 homolog FAP7 (197 aa).

ATP contacts are provided by glycine 17, glycine 19, lysine 20, serine 21, and serine 22. The NMPbind stretch occupies residues 38-61; it reads NISDFAKDNDCFEGYDEGRKSHIV. Positions 113–123 are LID; sequence ARGYHDSKIEE. Arginine 114 provides a ligand contact to ATP. Residues 176–197 form a disordered region; the sequence is PDGVTNEYQGPRSDDEDDEDSE. Phosphotyrosine is present on tyrosine 183. Phosphoserine occurs at positions 188 and 196.

Belongs to the adenylate kinase family. AK6 subfamily. As to quaternary structure, interacts with small ribosomal subunit protein uS11B/RPS14B. Not a structural component of 43S pre-ribosomes, but transiently interacts with them by binding to uS11/RPS14.

It localises to the cytoplasm. The protein resides in the nucleus. It catalyses the reaction AMP + ATP = 2 ADP. The catalysed reaction is ATP + H2O = ADP + phosphate + H(+). In terms of biological role, broad-specificity nucleoside monophosphate (NMP) kinase that catalyzes the reversible transfer of the terminal phosphate group between nucleoside triphosphates and monophosphates. Also has ATPase activity. Involved in the late cytoplasmic maturation steps of the 40S ribosomal particles, specifically 18S rRNA maturation. Required for cleavage of the 20S pre-rRNA at site D in the cytoplasm. While NMP activity is not required for ribosome maturation, ATPase activity is. Associates transiently with small ribosomal subunit protein uS11. ATP hydrolysis breaks the interaction with uS11. May temporarily remove uS11 from the ribosome to enable a conformational change of the ribosomal RNA that is needed for the final maturation step of the small ribosomal subunit. Promotes formation of the rotated state in 80S-like ribosomes, a key intermediate in translocation, thereby releasing the essential assembly factor DIM1 from pre-40S subunits. Its NMP activity may have a role in nuclear energy homeostasis. Involved in oxidative stress response. Required for POS9-dependent target gene transcription upon oxidative stress. The chain is Adenylate kinase isoenzyme 6 homolog FAP7 from Saccharomyces cerevisiae (strain ATCC 204508 / S288c) (Baker's yeast).